Here is a 183-residue protein sequence, read N- to C-terminus: Putative 3-methyladenine DNA glycosylase (183 aa).

This sequence belongs to the DNA glycosylase MPG family.

In Legionella pneumophila subsp. pneumophila (strain Philadelphia 1 / ATCC 33152 / DSM 7513), this protein is Putative 3-methyladenine DNA glycosylase.